The primary structure comprises 364 residues: Ferrochelatase (364 aa).

His213 and Glu294 together coordinate Fe cation.

It belongs to the ferrochelatase family.

The protein localises to the cytoplasm. It carries out the reaction heme b + 2 H(+) = protoporphyrin IX + Fe(2+). The protein operates within porphyrin-containing compound metabolism; protoheme biosynthesis; protoheme from protoporphyrin-IX: step 1/1. Its function is as follows. Catalyzes the ferrous insertion into protoporphyrin IX. The polypeptide is Ferrochelatase (Chromobacterium violaceum (strain ATCC 12472 / DSM 30191 / JCM 1249 / CCUG 213 / NBRC 12614 / NCIMB 9131 / NCTC 9757 / MK)).